Reading from the N-terminus, the 448-residue chain is Iroquois-class homeodomain protein irx-3 (448 aa).

Positions aspartate 108 to asparagine 170 form a DNA-binding region, homeobox; TALE-type. The interval lysine 171–asparagine 247 is disordered. Residues lysine 195 to aspartate 222 show a composition bias toward acidic residues. Positions threonine 223–serine 237 are enriched in basic and acidic residues. The span at glutamate 238–asparagine 247 shows a compositional bias: acidic residues.

Belongs to the TALE/IRO homeobox family. Primarily expressed in the developing central nervous system (CNS). At gastrula stage, expressed in both the superficial and deep layers of the presumptive neural plate with expression spreading to the prospective hindbrain, spinal cord and midbrain-hindbrain junction as neurulation proceeds. Not expressed in the anterior neural plate and CNS expression in the tadpole excludes the forebrain. Outside of the CNS, expressed around the closing blastopore at early gastrula stages and as gastrulation proceeds, expression switches to the anterior lateral plate mesoderm. In tadpoles, expressed in the ectodermal layer of the branchial arches, and in the otic vesicle. Also expressed in specific and overlapping dynamic patterns with irx1 and irx2 during pronephric kidney development. Renal expression begins before segment-specific terminal differentiation in the pronephric anlage at mid-neurula stage, and is later found in proximal tubule PT3 as well as intermediate tubule segments IT1 and IT2, with expression in the kidney being maintained through to the tadpole stage.

Its subcellular location is the nucleus. Functionally, acts partially redundantly with other irx members in neural patterning. Required for formation of the posterior forebrain, midbrain, hindbrain, and to a lesser extent, spinal cord. Both up-regulates and down-regulates gene expression during neural development. Acts early in neural plate development to induce proneural gene expression and specify a neural precursor state. Also up-regulates repressors that prevent neuronal differentiation. Required during at least two stages of pronephros kidney development; during neurula stages, maintains transcription of key renal genes to define the size and identity of the pronephric anlage, probably in part through regulation of bmp-signaling. Subsequently required for proper formation of the intermediate tubule segment of the pronephros. The chain is Iroquois-class homeodomain protein irx-3 (irx3) from Xenopus laevis (African clawed frog).